Reading from the N-terminus, the 451-residue chain is Tubulin alpha chain (451 aa).

An MREC motif motif is present at residues 1 to 4 (MREC). Glutamine 11 provides a ligand contact to GTP. Position 40 is an N6-acetyllysine (lysine 40). Positions 71, 140, 144, 145, 179, 206, and 228 each coordinate GTP. A Mg(2+)-binding site is contributed by glutamate 71. Residue glutamate 254 is part of the active site. Residues 432–451 (YEEVGVDSVEGEGEEEGEEY) are disordered. Residue glutamate 445 is modified to 5-glutamyl polyglutamate.

This sequence belongs to the tubulin family. Dimer of alpha and beta chains. A typical microtubule is a hollow water-filled tube with an outer diameter of 25 nm and an inner diameter of 15 nM. Alpha-beta heterodimers associate head-to-tail to form protofilaments running lengthwise along the microtubule wall with the beta-tubulin subunit facing the microtubule plus end conferring a structural polarity. Microtubules usually have 13 protofilaments but different protofilament numbers can be found in some organisms and specialized cells. It depends on Mg(2+) as a cofactor. Post-translationally, some glutamate residues at the C-terminus are polyglycylated, resulting in polyglycine chains on the gamma-carboxyl group. Glycylation is mainly limited to tubulin incorporated into axonemes (cilia and flagella) whereas glutamylation is prevalent in neuronal cells, centrioles, axonemes, and the mitotic spindle. Both modifications can coexist on the same protein on adjacent residues, and lowering polyglycylation levels increases polyglutamylation, and reciprocally. The precise function of polyglycylation is still unclear. Some glutamate residues at the C-terminus are polyglutamylated, resulting in polyglutamate chains on the gamma-carboxyl group. Polyglutamylation plays a key role in microtubule severing by spastin (SPAST). SPAST preferentially recognizes and acts on microtubules decorated with short polyglutamate tails: severing activity by SPAST increases as the number of glutamates per tubulin rises from one to eight, but decreases beyond this glutamylation threshold. In terms of processing, acetylation of alpha chains at Lys-40 is located inside the microtubule lumen. This modification has been correlated with increased microtubule stability, intracellular transport and ciliary assembly. Post-translationally, undergoes a tyrosination/detyrosination cycle, the cyclic removal and re-addition of a C-terminal tyrosine residue by the enzymes tubulin tyrosine carboxypeptidase (MATCAP, VASH1 or VASH2) and tubulin tyrosine ligase (TTL), respectively. Tyrosination promotes microtubule interaction with CAP-Gly microtubule plus-end tracking proteins. Tyrosinated tubulins regulate the initiation of dynein-driven motility. In terms of processing, detyrosination is involved in metaphase plate congression by guiding chromosomes during mitosis. Detyrosination increases microtubules-dependent mechanotransduction in dystrophic cardiac and skeletal muscle. In cardiomyocytes, detyrosinated microtubules are required to resist to contractile compression during contraction.

The protein localises to the cytoplasm. It is found in the cytoskeleton. It carries out the reaction GTP + H2O = GDP + phosphate + H(+). In terms of biological role, tubulin is the major constituent of microtubules, a cylinder consisting of laterally associated linear protofilaments composed of alpha- and beta-tubulin heterodimers. Microtubules grow by the addition of GTP-tubulin dimers to the microtubule end, where a stabilizing cap forms. Below the cap, tubulin dimers are in GDP-bound state, owing to GTPase activity of alpha-tubulin. This Torpedo marmorata (Marbled electric ray) protein is Tubulin alpha chain.